A 388-amino-acid polypeptide reads, in one-letter code: Cytochrome b (388 aa).

Helical transmembrane passes span 38-58, 82-104, 119-139, and 185-205; these read FGCL…FLAM, WLLR…LHIF, VWCL…IGYV, and FFSL…LHLA. The heme b site is built by His88 and His102. 2 residues coordinate heme b: His189 and His203. A ubiquinone is bound at residue His208. The next 4 helical transmembrane spans lie at 231–251, 295–315, 327–347, and 354–373; these read FYVK…IWIF, AGGV…PFFK, IHQG…WIGC, and FVTI…AITP.

It belongs to the cytochrome b family. The main subunits of complex b-c1 are: cytochrome b, cytochrome c1 and the Rieske protein. Heme b serves as cofactor.

The protein localises to the mitochondrion inner membrane. Functionally, component of the ubiquinol-cytochrome c reductase complex (complex III or cytochrome b-c1 complex) that is part of the mitochondrial respiratory chain. The b-c1 complex mediates electron transfer from ubiquinol to cytochrome c. Contributes to the generation of a proton gradient across the mitochondrial membrane that is then used for ATP synthesis. This chain is Cytochrome b (MT-CYB), found in Zea mays (Maize).